The primary structure comprises 229 residues: Large ribosomal subunit protein uL1 (229 aa).

The protein belongs to the universal ribosomal protein uL1 family. Part of the 50S ribosomal subunit.

Its function is as follows. Binds directly to 23S rRNA. The L1 stalk is quite mobile in the ribosome, and is involved in E site tRNA release. Protein L1 is also a translational repressor protein, it controls the translation of the L11 operon by binding to its mRNA. The sequence is that of Large ribosomal subunit protein uL1 from Bifidobacterium animalis subsp. lactis (strain AD011).